The following is a 290-amino-acid chain: Poly-beta-1,6-N-acetyl-D-glucosamine N-deacetylase (290 aa).

The N-terminal stretch at 1–28 is a signal peptide; it reads MKYRKLIILVLSILIILPVSTLDGHHIA. A NodB homology domain is found at 114–290; that stretch reads RSVWINFDDM…KRWDGFHEKD (177 aa).

It belongs to the polysaccharide deacetylase family.

Its subcellular location is the secreted. The protein resides in the cell wall. Catalyzes the N-deacetylation of poly-beta-1,6-N-acetyl-D-glucosamine (PNAG, also referred to as PIA), a biofilm adhesin polysaccharide. N-deacetylation is crucial for attachment of the polysaccharide to the bacterial cell surface; it leads to the introduction of positive charges in the otherwise neutral PIA polymer, allowing electrostatic interactions. This Staphylococcus aureus (strain Mu50 / ATCC 700699) protein is Poly-beta-1,6-N-acetyl-D-glucosamine N-deacetylase (icaB).